The primary structure comprises 304 residues: Acetylglutamate kinase (304 aa).

Substrate contacts are provided by residues 64 to 65 (GG), R86, and N181.

Belongs to the acetylglutamate kinase family. ArgB subfamily.

It localises to the plastid. Its subcellular location is the chloroplast. The enzyme catalyses N-acetyl-L-glutamate + ATP = N-acetyl-L-glutamyl 5-phosphate + ADP. The protein operates within amino-acid biosynthesis; L-arginine biosynthesis; N(2)-acetyl-L-ornithine from L-glutamate: step 2/4. In terms of biological role, catalyzes the ATP-dependent phosphorylation of N-acetyl-L-glutamate. This is Acetylglutamate kinase from Cyanidium caldarium (Red alga).